The primary structure comprises 677 residues: MTQVAKKILVTCALPYANGSIHLGHMLEHIQADVWVRYQRMRGHEVNFICADDAHGTPIMLKAQQLGITPEQMIGEMSQEHQTDFAGFNISYDNYHSTHSEENRQLSELIYTRLKENGFIKNRTISQLYDPEKGMFLPDRFVKGTCPKCKAPDQYGDNCEVCGATYSPTELIEPKSVVSGATPVMRDSEHFFFDLPSFSEMLQAWTRSGALQEQVANKMQEWFESGLQQWDISRDAPYFGFEIPNAPGKYFYVWLDAPIGYMGSFKNLCDKRGDSVSFDEYWKKDSTAELYHFIGKDIVYFHSLFWPAMLEGSNFRKPTNLFVHGYVTVNGAKMSKSRGTFIKASTWLNHFDADSLRYYYTAKLSSRIDDIDLNLEDFVQRVNADIVNKVVNLASRNAGFINKRFDGVLASELADPQLYKTFTDAAEVIGEAWESREFGKAIREIMALADLANRYVDEQAPWVVAKQEGRDADLQAICSMGINLFRVLMTYLKPVLPKLTERAEAFLNTELTWDGIQQPLLGHKVNPFKALYNRIDMKQVEALVEASKEEVKAAAAPVTGPLADDPIQETITFDDFAKVDLRVALIENAEFVEGSDKLLRLTLDLGGEKRNVFSGIRSAYPDPQALIGRHTIMVANLAPRKMRFGISEGMVMAAGPGGKDIFLLSPDAGAKPGHQVK.

A 'HIGH' region motif is present at residues 15 to 25 (PYANGSIHLGH). 4 residues coordinate Zn(2+): C146, C149, C159, and C162. Positions 333-337 (KMSKS) match the 'KMSKS' region motif. K336 serves as a coordination point for ATP. A tRNA-binding domain is found at 575 to 677 (DFAKVDLRVA…AGAKPGHQVK (103 aa)).

This sequence belongs to the class-I aminoacyl-tRNA synthetase family. MetG type 1 subfamily. Homodimer. Requires Zn(2+) as cofactor.

Its subcellular location is the cytoplasm. The catalysed reaction is tRNA(Met) + L-methionine + ATP = L-methionyl-tRNA(Met) + AMP + diphosphate. In terms of biological role, is required not only for elongation of protein synthesis but also for the initiation of all mRNA translation through initiator tRNA(fMet) aminoacylation. This chain is Methionine--tRNA ligase, found in Escherichia coli O127:H6 (strain E2348/69 / EPEC).